We begin with the raw amino-acid sequence, 703 residues long: Arylphorin subunit beta (703 aa).

The N-terminal stretch at 1–16 (MKTVIILAGLVALALG) is a signal peptide. Asn72 and Asn211 each carry an N-linked (GlcNAc...) asparagine glycan.

The protein belongs to the hemocyanin family. In terms of assembly, arylphorin is a hexamer of subunits alpha and beta. Fat body.

It is found in the secreted. Its subcellular location is the extracellular space. Functionally, arylphorin is a larval storage protein (LSP) which may serve as a storage protein used primarily as a source of aromatic amino acids for protein synthesis during metamorphosis. It is a constituent of the sclerotizing system of the cuticle, and serves as a carrier for ecdysteroid hormone. This is Arylphorin subunit beta from Manduca sexta (Tobacco hawkmoth).